The sequence spans 187 residues: Orotate phosphoribosyltransferase (187 aa).

Residues R103, K104, K107, and 129–137 each bind 5-phospho-alpha-D-ribose 1-diphosphate; that span reads EDVTTSGGS. Positions 133 and 161 each coordinate orotate.

The protein belongs to the purine/pyrimidine phosphoribosyltransferase family. PyrE subfamily. Homodimer. Requires Mg(2+) as cofactor.

It catalyses the reaction orotidine 5'-phosphate + diphosphate = orotate + 5-phospho-alpha-D-ribose 1-diphosphate. Its pathway is pyrimidine metabolism; UMP biosynthesis via de novo pathway; UMP from orotate: step 1/2. Catalyzes the transfer of a ribosyl phosphate group from 5-phosphoribose 1-diphosphate to orotate, leading to the formation of orotidine monophosphate (OMP). The protein is Orotate phosphoribosyltransferase of Methanosarcina mazei (strain ATCC BAA-159 / DSM 3647 / Goe1 / Go1 / JCM 11833 / OCM 88) (Methanosarcina frisia).